A 234-amino-acid polypeptide reads, in one-letter code: MVRAFAYEEIGETSTEAHASVEDNKRDRTRRVINYNLRSTTMISSLSKRLKIDECKNQDPEQNPNRVASSPSLCHVKSKRPQKGVSNKPILDMDFLNEEELEKIDRHYKKISDSDKGADVILVNSEGLQRKLKLKRWDMTSTSNYVLGSGWNKVVTENILETGTRLRLWSFHSPDMLFFALVLSDPDLAPTKDWECLNLLAKLTVETACLEASQDADTMSSLVSDTELDLELRL.

Positions 55–88 are disordered; sequence CKNQDPEQNPNRVASSPSLCHVKSKRPQKGVSNK. Polar residues predominate over residues 60-72; that stretch reads PEQNPNRVASSPS. A DNA-binding region (TF-B3) is located at residues 87-185; sequence NKPILDMDFL…MLFFALVLSD (99 aa).

The protein localises to the nucleus. This chain is Putative B3 domain-containing protein At2g18810, found in Arabidopsis thaliana (Mouse-ear cress).